The primary structure comprises 652 residues: MGELPFLSPEGARGPHINRGSLSSLEQGSVTGTEARHSLGVLHVSYSVSNRVGPWWNIKSCQQKWDRQILKDVSLYIESGQIMCILGSSGSGKTTLLDAISGRLRRTGTLEGEVFVNGCELRRDQFQDCFSYVLQSDVFLSSLTVRETLRYTAMLALCRSSADFYNKKVEAVMTELSLSHVADQMIGSYNFGGISSGERRRVSIAAQLLQDPKVMMLDEPTTGLDCMTANQIVLLLAELARRDRIVIVTIHQPRSELFQHFDKIAILTYGELVFCGTPEEMLGFFNNCGYPCPEHSNPFDFYMDLTSVDTQSREREIETYKRVQMLECAFKESDIYHKILENIERARYLKTLPTVPFKTKDPPGMFGKLGVLLRRVTRNLMRNKQAVIMRLVQNLIMGLFLIFYLLRVQNNTLKGAVQDRVGLLYQLVGATPYTGMLNAVNLFPMLRAVSDQESQDGLYHKWQMLLAYVLHVLPFSVIATVIFSSVCYWTLGLYPEVARFGYFSAALLAPHLIGEFLTLVLLGIVQNPNIVNSIVALLSISGLLIGSGFIRNIQEMPIPLKILGYFTFQKYCCEILVVNEFYGLNFTCGGSNTSMLNHPMCAITQGVQFIEKTCPGATSRFTANFLILYGFIPALVILGIVIFKVRDYLISR.

A disordered region spans residues 1 to 25; it reads MGELPFLSPEGARGPHINRGSLSSL. The Cytoplasmic segment spans residues 1 to 384; sequence MGELPFLSPE…RVTRNLMRNK (384 aa). Residues 39-294 enclose the ABC transporter domain; that stretch reads LGVLHVSYSV…FNNCGYPCPE (256 aa). The S-palmitoyl cysteine moiety is linked to residue Cys61. Position 87 to 94 (87 to 94) interacts with ATP; it reads GSSGSGKT. A helical transmembrane segment spans residues 385 to 405; sequence QAVIMRLVQNLIMGLFLIFYL. Residues 389–646 form the ABC transmembrane type-2 domain; sequence MRLVQNLIMG…ILGIVIFKVR (258 aa). The Extracellular segment spans residues 406-422; that stretch reads LRVQNNTLKGAVQDRVG. N-linked (GlcNAc...) asparagine glycosylation is present at Asn410. Residues 423–443 traverse the membrane as a helical segment; the sequence is LLYQLVGATPYTGMLNAVNLF. Residues 444-468 are Cytoplasmic-facing; the sequence is PMLRAVSDQESQDGLYHKWQMLLAY. Residues 469-490 traverse the membrane as a helical segment; sequence VLHVLPFSVIATVIFSSVCYWT. The Extracellular portion of the chain corresponds to 491-501; sequence LGLYPEVARFG. Residues 502 to 522 form a helical membrane-spanning segment; that stretch reads YFSAALLAPHLIGEFLTLVLL. Residues 523 to 529 lie on the Cytoplasmic side of the membrane; the sequence is GIVQNPN. A helical membrane pass occupies residues 530 to 550; the sequence is IVNSIVALLSISGLLIGSGFI. Over 551-624 the chain is Extracellular; that stretch reads RNIQEMPIPL…PGATSRFTAN (74 aa). 2 N-linked (GlcNAc...) asparagine glycosylation sites follow: Asn585 and Asn592. A helical transmembrane segment spans residues 625-645; that stretch reads FLILYGFIPALVILGIVIFKV. At 646 to 652 the chain is on the cytoplasmic side; that stretch reads RDYLISR.

It belongs to the ABC transporter superfamily. ABCG family. Eye pigment precursor importer (TC 3.A.1.204) subfamily. Heterodimer with ABCG8. Requires Mg(2+) as cofactor. Post-translationally, N-glycosylated. N-glycosylation is important for efficient export out of the endoplasmic reticulum. In terms of tissue distribution, detected in liver and jejunum. Detected on enterocyte villi (at protein level). Expressed in jejunum, ileum and, at lower level, in the liver.

It localises to the cell membrane. It is found in the apical cell membrane. The catalysed reaction is cholesterol(in) + ATP + H2O = cholesterol(out) + ADP + phosphate + H(+). It catalyses the reaction sitosterol(in) + ATP + H2O = sitosterol(out) + ADP + phosphate + H(+). Its activity is regulated as follows. Cholesterol transport is inhibited by vanadate and by beryllium fluoride. Functionally, ABCG5 and ABCG8 form an obligate heterodimer that mediates Mg(2+)- and ATP-dependent sterol transport across the cell membrane. Plays an essential role in the selective transport of dietary plant sterols and cholesterol in and out of the enterocytes and in the selective sterol excretion by the liver into bile. Required for normal sterol homeostasis. The heterodimer with ABCG8 has ATPase activity. The polypeptide is ATP-binding cassette sub-family G member 5 (Mus musculus (Mouse)).